The chain runs to 309 residues: Aurora kinase C (309 aa).

A disordered region spans residues 1-33 (MSSPRAVVQLGKAQPAGEELATANQTAQQPSSP). Residues 22-32 (TANQTAQQPSS) are compositionally biased toward polar residues. The Protein kinase domain maps to 43 to 293 (FEIGRPLGKG…LAQILKHPWV (251 aa)). Residues 49–57 (LGKGKFGNV) and Lys72 each bind ATP. The Proton acceptor role is filled by Asp166. Residue Thr198 is modified to Phosphothreonine; by PKA. The tract at residues 292 to 309 (WVQAHSRRVLPPCAQMAS) is interaction with BIRC5.

Belongs to the protein kinase superfamily. Ser/Thr protein kinase family. Aurora subfamily. In terms of assembly, component of the chromosomal passenger complex (CPC) composed of at least BIRC5/survivin, CDCA8/borealin, INCENP, AURKB or AURKC; predominantly independent AURKB- and AURKC-containing complexes exist; in the complex interacts directly with BIRC5/survivin and INCENP. Interacts with TACC1. Isoform 1 and isoform 2 are expressed in testis. Elevated expression levels were seen only in a subset of cancer cell lines such as Hep-G2, Huh-7 and HeLa. Expression is maximum at M phase.

The protein resides in the nucleus. It localises to the chromosome. The protein localises to the centromere. Its subcellular location is the cytoplasm. It is found in the cytoskeleton. The protein resides in the spindle. The catalysed reaction is L-seryl-[protein] + ATP = O-phospho-L-seryl-[protein] + ADP + H(+). It catalyses the reaction L-threonyl-[protein] + ATP = O-phospho-L-threonyl-[protein] + ADP + H(+). Its activity is regulated as follows. Okadaic acid, an inhibitor of protein phosphatase 1 (PP1), protein phosphatase 2A (PP2A) and protein phosphatase 5 (PP5), increases AURKC activity. AURKC is also stabilized through its interaction with INCENP, which also acts as an activator. Functionally, serine/threonine-protein kinase component of the chromosomal passenger complex (CPC), a complex that acts as a key regulator of mitosis. The CPC complex has essential functions at the centromere in ensuring correct chromosome alignment and segregation and is required for chromatin-induced microtubule stabilization and spindle assembly. Also plays a role in meiosis and more particularly in spermatogenesis. Has redundant cellular functions with AURKB and can rescue an AURKB knockdown. Like AURKB, AURKC phosphorylates histone H3 at 'Ser-10' and 'Ser-28'. AURKC phosphorylates the CPC complex subunits BIRC5/survivin and INCENP leading to increased AURKC activity. Phosphorylates TACC1, another protein involved in cell division, at 'Ser-228'. The chain is Aurora kinase C (AURKC) from Homo sapiens (Human).